The primary structure comprises 146 residues: Phospholipase A2 PS22 (146 aa).

The first 19 residues, 1–19 (MYPAHLLVLLAVCVSLLGA), serve as a signal peptide directing secretion. Residues 20 to 27 (ASVPPQPL) constitute a propeptide that is removed on maturation. Cystine bridges form between Cys-38/Cys-98, Cys-54/Cys-145, Cys-56/Cys-72, Cys-71/Cys-126, Cys-78/Cys-119, Cys-87/Cys-112, and Cys-105/Cys-117. Positions 55, 57, and 59 each coordinate Ca(2+). His-75 is a catalytic residue. Asp-76 is a Ca(2+) binding site. Asp-120 is a catalytic residue.

It belongs to the phospholipase A2 family. Group I subfamily. D49 sub-subfamily. Ca(2+) is required as a cofactor. In terms of tissue distribution, expressed by the venom gland.

The protein localises to the secreted. It catalyses the reaction a 1,2-diacyl-sn-glycero-3-phosphocholine + H2O = a 1-acyl-sn-glycero-3-phosphocholine + a fatty acid + H(+). Functionally, snake venom phospholipase A2 (PLA2) that inhibits collagen-induced platelet aggregation. PLA2 catalyzes the calcium-dependent hydrolysis of the 2-acyl groups in 3-sn-phosphoglycerides. This is Phospholipase A2 PS22 from Drysdalia coronoides (White-lipped snake).